The following is a 679-amino-acid chain: DNA ligase (679 aa).

Residues Asp43 to Asp47, Ser92 to Met93, and Glu124 contribute to the NAD(+) site. Lys126 acts as the N6-AMP-lysine intermediate in catalysis. 4 residues coordinate NAD(+): Arg147, Glu181, Lys297, and Lys321. Residues Cys415, Cys418, Cys433, and Cys438 each coordinate Zn(2+). The region spanning Thr599–Asn679 is the BRCT domain.

This sequence belongs to the NAD-dependent DNA ligase family. LigA subfamily. Requires Mg(2+) as cofactor. Mn(2+) serves as cofactor.

The catalysed reaction is NAD(+) + (deoxyribonucleotide)n-3'-hydroxyl + 5'-phospho-(deoxyribonucleotide)m = (deoxyribonucleotide)n+m + AMP + beta-nicotinamide D-nucleotide.. DNA ligase that catalyzes the formation of phosphodiester linkages between 5'-phosphoryl and 3'-hydroxyl groups in double-stranded DNA using NAD as a coenzyme and as the energy source for the reaction. It is essential for DNA replication and repair of damaged DNA. This chain is DNA ligase, found in Limosilactobacillus fermentum (strain NBRC 3956 / LMG 18251) (Lactobacillus fermentum).